Consider the following 215-residue polypeptide: Adenylate kinase (215 aa).

ATP is bound at residue 10-15 (GAGKGT). The NMP stretch occupies residues 30–59 (STGDMFRAAMKNETEMGKLAKSFIDKGELV). AMP-binding positions include threonine 31, arginine 36, 57–59 (ELV), 86–89 (GYPR), and glutamine 93. Residues 127 to 165 (GRYICRNCGATYHKIFNPTKVEGVCDVCGSHDLYQRADD) form an LID region. Arginine 128 serves as a coordination point for ATP. Zn(2+)-binding residues include cysteine 131 and cysteine 134. 137 to 138 (TY) serves as a coordination point for ATP. Zn(2+)-binding residues include cysteine 151 and cysteine 154. The AMP site is built by arginine 162 and arginine 173. Position 201 (glutamine 201) interacts with ATP.

Belongs to the adenylate kinase family. Monomer.

The protein resides in the cytoplasm. It carries out the reaction AMP + ATP = 2 ADP. It participates in purine metabolism; AMP biosynthesis via salvage pathway; AMP from ADP: step 1/1. Catalyzes the reversible transfer of the terminal phosphate group between ATP and AMP. Plays an important role in cellular energy homeostasis and in adenine nucleotide metabolism. The sequence is that of Adenylate kinase from Lactococcus lactis subsp. lactis (strain IL1403) (Streptococcus lactis).